Reading from the N-terminus, the 157-residue chain is Transcriptional repressor NrdR (157 aa).

The interval methionine 1–glycine 22 is disordered. Residues cysteine 3 to cysteine 34 fold into a zinc finger. In terms of domain architecture, ATP-cone spans leucine 49–glutamate 139.

Belongs to the NrdR family. It depends on Zn(2+) as a cofactor.

Its function is as follows. Negatively regulates transcription of bacterial ribonucleotide reductase nrd genes and operons by binding to NrdR-boxes. In Streptococcus pneumoniae (strain Hungary19A-6), this protein is Transcriptional repressor NrdR.